The following is an 83-amino-acid chain: Small ribosomal subunit protein eS21 (83 aa).

This sequence belongs to the eukaryotic ribosomal protein eS21 family. Component of the 40S small ribosomal subunit. Interacts with sta.

It localises to the cytoplasm. It is found in the cytosol. Its subcellular location is the rough endoplasmic reticulum. Functionally, may be an associated component of the ribosome rather than a core structural subunit. May act as a translation initiation factor. Has a role in regulation of cell proliferation in the hematopoietic organs and the imaginal disks of larva. The sequence is that of Small ribosomal subunit protein eS21 (RpS21) from Drosophila erecta (Fruit fly).